The sequence spans 714 residues: Calpain-1 catalytic subunit (714 aa).

The Calpain catalytic domain occupies 55-354 (LFRDEAFPPV…FTRLEICNLT (300 aa)). Positions 109 and 114 each coordinate Ca(2+). Active-site residues include Cys115, His272, and Asn296. Residues Ser316, Asp318, and Glu323 each coordinate Ca(2+). The residue at position 354 (Thr354) is a Phosphothreonine. Residues 355–526 (PDALKSRTIR…KSAGTAELDD (172 aa)) form a domain III region. A linker region spans residues 527-542 (QIQANLPDEQVLSEEE). 4 EF-hand domains span residues 541 to 576 (EEID…IISK), 585 to 618 (FSLE…NRIR), 615 to 650 (NRIR…AGFK), and 680 to 714 (VRLE…TMFA). The interval 543-713 (IDENFKALFR…LFKWLQLTMF (171 aa)) is domain IV. Ca(2+) is bound by residues Asp598, Asp600, Asn602, Lys604, Glu609, Asp628, Asp630, Ser632, Ser634, and Glu639.

Belongs to the peptidase C2 family. Forms a heterodimer with a small (regulatory) subunit (CAPNS1). It depends on Ca(2+) as a cofactor. In terms of processing, undergoes calcium-induced successive autoproteolytic cleavages that generate a membrane-bound 78 kDa active form and an intracellular 75 kDa active form. Calpastatin reduces with high efficiency the transition from 78 kDa to 75 kDa calpain forms. As to expression, ubiquitous.

Its subcellular location is the cytoplasm. The protein resides in the cell membrane. It catalyses the reaction Broad endopeptidase specificity.. With respect to regulation, activated by micromolar concentrations of calcium and inhibited by calpastatin. Calcium-regulated non-lysosomal thiol-protease which catalyze limited proteolysis of substrates involved in cytoskeletal remodeling and signal transduction. Proteolytically cleaves CTBP1. Cleaves and activates caspase-7 (CASP7). This Macaca fascicularis (Crab-eating macaque) protein is Calpain-1 catalytic subunit (CAPN1).